The following is a 183-amino-acid chain: tRNA-splicing endonuclease (183 aa).

Active-site residues include tyrosine 120, histidine 128, and lysine 159.

Belongs to the tRNA-intron endonuclease family. Archaeal short subfamily. In terms of assembly, homotetramer; although the tetramer contains four active sites, only two participate in the cleavage. Therefore, it should be considered as a dimer of dimers.

It carries out the reaction pretRNA = a 3'-half-tRNA molecule with a 5'-OH end + a 5'-half-tRNA molecule with a 2',3'-cyclic phosphate end + an intron with a 2',3'-cyclic phosphate and a 5'-hydroxyl terminus.. Endonuclease that removes tRNA introns. Cleaves pre-tRNA at the 5'- and 3'-splice sites to release the intron. The products are an intron and two tRNA half-molecules bearing 2',3' cyclic phosphate and 5'-OH termini. Recognizes a pseudosymmetric substrate in which 2 bulged loops of 3 bases are separated by a stem of 4 bp. The protein is tRNA-splicing endonuclease of Pyrobaculum arsenaticum (strain DSM 13514 / JCM 11321 / PZ6).